A 385-amino-acid polypeptide reads, in one-letter code: MNKTKMDSKVLDSILMKMLKTVDGSKDEVFQIGEQSRQQYEQLVEELKQIKQQVYEVIELGDKLEVQTRHARNRLSEVSRNFHRFSEEEIRNAYEKAHKLQVELTMIQQREKQLRERRDDLERRLLGLQEIIERSESLVSQITVVLNYLNQDLREVGLLLADAQAKQDFGLRIIEAQEEERKRVSREIHDGPAQMLANVMMRSELIERIFRDRGAEDGFQEIKNLRQNVRNALYEVRRIIYDLRPMALDDLGLIPTLRKYLYTTEEYNGKVKIHFQCIGETEDQRLAPQFEVALFRLAQEAVSNALKHSESEEITVKVEITKDFVILMIKDNGKGFDLKEAKEKKNKSFGLLGMKERVDLLEGTMTIDSKIGLGTFIMIKVPLSL.

The stretch at 31–141 forms a coiled coil; sequence QIGEQSRQQY…IERSESLVSQ (111 aa). Residue serine 76 is modified to Phosphoserine. In terms of domain architecture, Histidine kinase spans 183–385; that stretch reads RVSREIHDGP…FIMIKVPLSL (203 aa). Position 189 is a phosphohistidine; by autocatalysis (histidine 189).

In terms of processing, autophosphorylated. Phosphorylated in vitro at Ser-76 by the serine/threonine-protein kinase YbdM, which stimulates the phosphate transfer to DegU.

Its subcellular location is the cytoplasm. It carries out the reaction ATP + protein L-histidine = ADP + protein N-phospho-L-histidine.. Its activity is regulated as follows. Regulated via serine phosphorylation of its input domain. Phosphotransfer from DegS to DegU is stimulated by phosphorylation on Ser-76 and by DegQ. Its function is as follows. Member of the two-component regulatory system DegS/DegU, which plays an important role in the transition growth phase. Involved in the control of expression of different cellular functions, including production of degradative enzymes such as the neutral and alkaline proteases, flagellum formation and biofilm formation. Acts both as a protein kinase that undergoes autophosphorylation and subsequently transfers the phosphate to DegU, and as a protein phosphatase that dephosphorylates phospho-DegU. The sequence is that of Signal transduction histidine-protein kinase/phosphatase DegS (degS) from Bacillus subtilis (strain 168).